The chain runs to 272 residues: Shikimate dehydrogenase (NADP(+)) (272 aa).

Shikimate contacts are provided by residues Ser-19 to Ser-21 and Thr-66. Catalysis depends on Lys-70, which acts as the Proton acceptor. Glu-82 provides a ligand contact to NADP(+). Shikimate is bound by residues Asn-91 and Asp-106. NADP(+) contacts are provided by residues Gly-129 to Ala-133, Asn-151 to Lys-156, and Ile-214. Residue Tyr-216 coordinates shikimate. An NADP(+)-binding site is contributed by Gly-237.

It belongs to the shikimate dehydrogenase family. Homodimer.

It catalyses the reaction shikimate + NADP(+) = 3-dehydroshikimate + NADPH + H(+). Its pathway is metabolic intermediate biosynthesis; chorismate biosynthesis; chorismate from D-erythrose 4-phosphate and phosphoenolpyruvate: step 4/7. Its function is as follows. Involved in the biosynthesis of the chorismate, which leads to the biosynthesis of aromatic amino acids. Catalyzes the reversible NADPH linked reduction of 3-dehydroshikimate (DHSA) to yield shikimate (SA). In Thermococcus kodakarensis (strain ATCC BAA-918 / JCM 12380 / KOD1) (Pyrococcus kodakaraensis (strain KOD1)), this protein is Shikimate dehydrogenase (NADP(+)).